A 337-amino-acid polypeptide reads, in one-letter code: 4-hydroxy-3-methylbut-2-enyl diphosphate reductase (337 aa).

C38 lines the [4Fe-4S] cluster pocket. The (2E)-4-hydroxy-3-methylbut-2-enyl diphosphate site is built by H67 and H100. The dimethylallyl diphosphate site is built by H67 and H100. Isopentenyl diphosphate-binding residues include H67 and H100. Residue C122 participates in [4Fe-4S] cluster binding. Residue H150 participates in (2E)-4-hydroxy-3-methylbut-2-enyl diphosphate binding. H150 serves as a coordination point for dimethylallyl diphosphate. H150 is a binding site for isopentenyl diphosphate. Catalysis depends on E152, which acts as the Proton donor. T190 lines the (2E)-4-hydroxy-3-methylbut-2-enyl diphosphate pocket. C220 contributes to the [4Fe-4S] cluster binding site. (2E)-4-hydroxy-3-methylbut-2-enyl diphosphate is bound by residues S248, S249, N250, and S293. Positions 248, 249, 250, and 293 each coordinate dimethylallyl diphosphate. Isopentenyl diphosphate is bound by residues S248, S249, N250, and S293.

Belongs to the IspH family. Requires [4Fe-4S] cluster as cofactor.

The catalysed reaction is isopentenyl diphosphate + 2 oxidized [2Fe-2S]-[ferredoxin] + H2O = (2E)-4-hydroxy-3-methylbut-2-enyl diphosphate + 2 reduced [2Fe-2S]-[ferredoxin] + 2 H(+). The enzyme catalyses dimethylallyl diphosphate + 2 oxidized [2Fe-2S]-[ferredoxin] + H2O = (2E)-4-hydroxy-3-methylbut-2-enyl diphosphate + 2 reduced [2Fe-2S]-[ferredoxin] + 2 H(+). The protein operates within isoprenoid biosynthesis; dimethylallyl diphosphate biosynthesis; dimethylallyl diphosphate from (2E)-4-hydroxy-3-methylbutenyl diphosphate: step 1/1. It functions in the pathway isoprenoid biosynthesis; isopentenyl diphosphate biosynthesis via DXP pathway; isopentenyl diphosphate from 1-deoxy-D-xylulose 5-phosphate: step 6/6. Catalyzes the conversion of 1-hydroxy-2-methyl-2-(E)-butenyl 4-diphosphate (HMBPP) into a mixture of isopentenyl diphosphate (IPP) and dimethylallyl diphosphate (DMAPP). Acts in the terminal step of the DOXP/MEP pathway for isoprenoid precursor biosynthesis. This chain is 4-hydroxy-3-methylbut-2-enyl diphosphate reductase, found in Mycolicibacterium vanbaalenii (strain DSM 7251 / JCM 13017 / BCRC 16820 / KCTC 9966 / NRRL B-24157 / PYR-1) (Mycobacterium vanbaalenii).